The following is a 282-amino-acid chain: Putative lactoylglutathione lyase (282 aa).

Alanine 2 carries the post-translational modification N-acetylalanine. VOC domains follow at residues 17–141 (RFLH…LIQR) and 147–274 (PLCQ…LVDN). Residue histidine 20 participates in Zn(2+) binding. Arginine 24 is a substrate binding site. Glutamate 71 is a Zn(2+) binding site. Positions 75 and 89 each coordinate substrate. Histidine 89 and glutamate 137 together coordinate Zn(2+). The Proton donor/acceptor role is filled by glutamate 137. Position 254–255 (254–255 (LG)) interacts with substrate.

It belongs to the glyoxalase I family. Zn(2+) is required as a cofactor.

The enzyme catalyses (R)-S-lactoylglutathione = methylglyoxal + glutathione. It functions in the pathway secondary metabolite metabolism; methylglyoxal degradation; (R)-lactate from methylglyoxal: step 1/2. Functionally, catalyzes the conversion of hemimercaptal, formed from methylglyoxal and glutathione, to S-lactoylglutathione. This is Putative lactoylglutathione lyase from Brassica oleracea var. gemmifera (Brussel sprouts).